The chain runs to 505 residues: Bile acid-sensitive ion channel (505 aa).

The segment at 1–30 (MEQTEKSKVYAENGLLEKIKLCLSKKPLPS) is binds the plasma membrane and stabilizes the channel in the closed state. Residues 1–61 (MEQTEKSKVY…NIVQNRSKIR (61 aa)) lie on the Cytoplasmic side of the membrane. The helical transmembrane segment at 62-82 (RVLWLVVVLGSVSLVTWQIYI) threads the bilayer. Topologically, residues 83 to 459 (RLLNYFTWPT…GLFCGASLIT (377 aa)) are extracellular. 6 cysteine pairs are disulfide-bonded: Cys-112–Cys-207, Cys-185–Cys-192, Cys-298–Cys-377, Cys-315–Cys-373, Cys-328–Cys-350, and Cys-330–Cys-342. N-linked (GlcNAc...) asparagine glycans are attached at residues Asn-147, Asn-163, Asn-178, and Asn-179. Asn-306 carries N-linked (GlcNAc...) asparagine glycosylation. Residues Asn-370, Asn-405, and Asn-421 are each glycosylated (N-linked (GlcNAc...) asparagine). The GAS motif; ion selectivity filter motif lies at 454-456 (GAS). A helical transmembrane segment spans residues 460-480 (IIEIIEYLFTNFYWICIFFLL). Residues 481–505 (KISEMTQWTPPPQNHLGNKNRIEEC) lie on the Cytoplasmic side of the membrane.

Belongs to the amiloride-sensitive sodium channel (TC 1.A.6) family. ASIC5 subfamily. As to quaternary structure, forms homotrimeric channels. As to expression, detected in small intestine, duodenum and jejunum. Detected at very low levels in testis and rectum.

It is found in the apical cell membrane. The protein resides in the cell membrane. It carries out the reaction Na(+)(in) = Na(+)(out). The catalysed reaction is Li(+)(in) = Li(+)(out). It catalyses the reaction K(+)(in) = K(+)(out). The enzyme catalyses H(+)(in) = H(+)(out). With respect to regulation, inhibited by the diuretic drug amiloride. Its function is as follows. Forms bile acid-gated sodium channels and may play a role in bile acid-dependent absorption and secretion by epithelial cells of the bile ducts. Displays high selectivity for sodium ions but can also permit the permeation of other cations. The gating could be indirect and the consequence of alterations of the membrane environment of the channel by bile acids. As a sodium channel of type II unipolar brush cells of the vestibulocerebellum, controlling the electrical activity of these cells, could play a role in motor coordination and balance. This is Bile acid-sensitive ion channel from Homo sapiens (Human).